A 752-amino-acid polypeptide reads, in one-letter code: Iron-sulfur clusters transporter ABCB7, mitochondrial (752 aa).

The N-terminal 22 residues, 1–22, are a transit peptide targeting the mitochondrion; sequence MALLAIHSWRWAAAAVAFEKHK. At 23–140 the chain is on the mitochondrial matrix side; sequence HSAVLTRSLV…KDRPDLRARV (118 aa). In terms of domain architecture, ABC transmembrane type-1 spans 140–436; it reads VAISLGFLGG…LGTVYRETRQ (297 aa). A helical membrane pass occupies residues 141 to 161; that stretch reads AISLGFLGGAKAMNIVVPFMF. The Mitochondrial intermembrane portion of the chain corresponds to 162 to 185; that stretch reads KYAVDSLNQMSGNMLNLSDAPNTV. Residues 186 to 206 traverse the membrane as a helical segment; the sequence is ATMATAVLIGYGVSRAGAAFF. Residues 207–259 are Mitochondrial matrix-facing; it reads NEVRNAVFGKVAQNSIRRIAKNVFLHLHNLDLGFHLSRQTGALSKAIDRGTRG. N6-acetyllysine is present on residues K216 and K251. A helical transmembrane segment spans residues 260–280; it reads ISFVLSALVFNLLPIVFEMTL. The Mitochondrial intermembrane segment spans residues 281 to 290; sequence VSSVLYYKCG. The chain crosses the membrane as a helical span at residues 291–311; it reads AQFALVTLGTLGAYTAFTVAV. At 312 to 382 the chain is on the mitochondrial matrix side; that stretch reads TRWRTRFRIE…TLAMLNFGQS (71 aa). Residue 315 to 319 participates in glutathione binding; it reads RTRFR. S336 is subject to Phosphoserine. Position 340 is a phosphotyrosine (Y340). T342 is modified (phosphothreonine). At K350 the chain carries N6-acetyllysine. Position 378–381 (378–381) interacts with glutathione; the sequence is NFGQ. Residues 383–403 traverse the membrane as a helical segment; that stretch reads AIFSVGLTAIMVLASQGIVAG. The Mitochondrial intermembrane portion of the chain corresponds to 404–409; the sequence is ALTVGD. Residues 410-430 form a helical membrane-spanning segment; sequence LVMVNGLLFQLSLPLNFLGTV. A glutathione-binding site is contributed by G428. Residues 431-752 lie on the Mitochondrial matrix side of the membrane; the sequence is YRETRQALID…SVKGCGNCSC (322 aa). Positions 472–706 constitute an ABC transporter domain; sequence VAFDNVHFEY…SSSIYSEMWH (235 aa). ATP-binding positions include Y481 and 505–516; that span reads GGSGSGKSTIVR.

The protein belongs to the ABC transporter superfamily. ABCB family. Heavy Metal importer (TC 3.A.1.210) subfamily. In terms of assembly, homodimer or heterodimer. Interacts with C10orf88/PAAT. Forms a complex with ABCB10 and FECH, where a dimeric FECH bridges ABCB7 and ABCB10 homodimers; this complex may be required for cellular iron homeostasis, mitochondrial function and heme biosynthesis. Interacts with FECH. Interacts with ATP5F1A. Interacts with COX4I1; this interaction allows the regulation of cellular iron homeostasis and cellular reactive oxygen species (ROS) levels in cardiomyocytes.

Its subcellular location is the mitochondrion inner membrane. The catalysed reaction is (glutathione)4[2Fe(III)-2S] cluster(in) + ATP + H2O = (glutathione)4[2Fe(III)-2S] cluster(out) + ADP + phosphate + H(+). Exports glutathione-coordinated iron-sulfur clusters such as [2Fe-2S]-(GS)4 cluster from the mitochondria to the cytosol in an ATP-dependent manner allowing the assembly of the cytosolic iron-sulfur (Fe/S) cluster-containing proteins and participates in iron homeostasis. Moreover, through a functional complex formed of ABCB7, FECH and ABCB10, also plays a role in the cellular iron homeostasis, mitochondrial function and heme biosynthesis. In cardiomyocytes, regulates cellular iron homeostasis and cellular reactive oxygen species (ROS) levels through its interaction with COX4I1. May also play a role in hematopoiesis. This is Iron-sulfur clusters transporter ABCB7, mitochondrial from Rattus norvegicus (Rat).